The following is a 148-amino-acid chain: SsrA-binding protein (148 aa).

The protein belongs to the SmpB family.

It is found in the cytoplasm. Required for rescue of stalled ribosomes mediated by trans-translation. Binds to transfer-messenger RNA (tmRNA), required for stable association of tmRNA with ribosomes. tmRNA and SmpB together mimic tRNA shape, replacing the anticodon stem-loop with SmpB. tmRNA is encoded by the ssrA gene; the 2 termini fold to resemble tRNA(Ala) and it encodes a 'tag peptide', a short internal open reading frame. During trans-translation Ala-aminoacylated tmRNA acts like a tRNA, entering the A-site of stalled ribosomes, displacing the stalled mRNA. The ribosome then switches to translate the ORF on the tmRNA; the nascent peptide is terminated with the 'tag peptide' encoded by the tmRNA and targeted for degradation. The ribosome is freed to recommence translation, which seems to be the essential function of trans-translation. The protein is SsrA-binding protein of Ehrlichia ruminantium (strain Gardel).